The primary structure comprises 480 residues: Ribulose bisphosphate carboxylase large chain (480 aa).

A propeptide spanning residues 1 to 2 (MS) is cleaved from the precursor. At Pro3 the chain carries N-acetylproline. Residue Lys14 is modified to N6,N6,N6-trimethyllysine. Asn123 and Thr173 together coordinate substrate. The Proton acceptor role is filled by Lys175. Lys177 provides a ligand contact to substrate. Mg(2+) is bound by residues Lys201, Asp203, and Glu204. Lys201 carries the post-translational modification N6-carboxylysine. His294 functions as the Proton acceptor in the catalytic mechanism. 3 residues coordinate substrate: Arg295, His327, and Ser379.

This sequence belongs to the RuBisCO large chain family. Type I subfamily. In terms of assembly, heterohexadecamer of 8 large chains and 8 small chains; disulfide-linked. The disulfide link is formed within the large subunit homodimers. Mg(2+) serves as cofactor. The disulfide bond which can form in the large chain dimeric partners within the hexadecamer appears to be associated with oxidative stress and protein turnover.

It localises to the plastid. The protein localises to the chloroplast. It catalyses the reaction 2 (2R)-3-phosphoglycerate + 2 H(+) = D-ribulose 1,5-bisphosphate + CO2 + H2O. It carries out the reaction D-ribulose 1,5-bisphosphate + O2 = 2-phosphoglycolate + (2R)-3-phosphoglycerate + 2 H(+). Its function is as follows. RuBisCO catalyzes two reactions: the carboxylation of D-ribulose 1,5-bisphosphate, the primary event in carbon dioxide fixation, as well as the oxidative fragmentation of the pentose substrate in the photorespiration process. Both reactions occur simultaneously and in competition at the same active site. The sequence is that of Ribulose bisphosphate carboxylase large chain from Phalaenopsis aphrodite subsp. formosana (Moth orchid).